The primary structure comprises 325 residues: Mitochondrial citrate transporter C (325 aa).

Solcar repeat units follow at residues 15–105 (ASPA…YKQM), 117–208 (KATF…LKAF), and 221–310 (LPSY…LKGK). Transmembrane regions (helical) follow at residues 21-41 (LIAGGGAGMMEALVCHPLDTI), 82-102 (GAVLGGIIPKMAIRFTSYESY), 121-141 (LAGLAAGVTEAVAVVNPMEVV), 187-207 (TALRQGTNQAANFTAYTELKA), 221-241 (LPSYQTTFIGLISGAVGPFSN), and 282-303 (FYKGITPRVMRVAPGQAVTFTV).

Belongs to the mitochondrial carrier (TC 2.A.29) family.

Its subcellular location is the mitochondrion inner membrane. Mitochondrial transporter that does not mediate citrate export from mitochondria to cytoplasm. Its exact function has still to be determined. The sequence is that of Mitochondrial citrate transporter C from Aspergillus niger (strain ATCC 1015 / CBS 113.46 / FGSC A1144 / LSHB Ac4 / NCTC 3858a / NRRL 328 / USDA 3528.7).